The following is a 329-amino-acid chain: Sulfate/thiosulfate import ATP-binding protein CysA (329 aa).

The ABC transporter domain maps to 3–237 (IEIRNVSKNF…PASDFVYHFL (235 aa)). 35–42 (GPSGCGKT) serves as a coordination point for ATP.

Belongs to the ABC transporter superfamily. Sulfate/tungstate importer (TC 3.A.1.6) family. The complex is composed of two ATP-binding proteins (CysA), two transmembrane proteins (CysT and CysW) and a solute-binding protein (CysP).

The protein resides in the cell inner membrane. The catalysed reaction is sulfate(out) + ATP + H2O = sulfate(in) + ADP + phosphate + H(+). It catalyses the reaction thiosulfate(out) + ATP + H2O = thiosulfate(in) + ADP + phosphate + H(+). Its function is as follows. Part of the ABC transporter complex CysAWTP involved in sulfate/thiosulfate import. Responsible for energy coupling to the transport system. The sequence is that of Sulfate/thiosulfate import ATP-binding protein CysA from Pseudomonas aeruginosa (strain ATCC 15692 / DSM 22644 / CIP 104116 / JCM 14847 / LMG 12228 / 1C / PRS 101 / PAO1).